The primary structure comprises 657 residues: Tetracycline resistance protein TetQ (657 aa).

The tr-type G domain maps to 17–260 (MNIINLGILA…AISSFILPPE (244 aa)). Residues 26-33 (AHIDAGKT), 90-94 (DTPGH), and 144-147 (NKID) each bind GTP.

It belongs to the TRAFAC class translation factor GTPase superfamily. Classic translation factor GTPase family. TetM/TetO subfamily.

Functionally, abolishes the inhibitory effect of tetracycline on protein synthesis by non-covalently modifying ribosomes. Confers mild resistance to tetracycline when expressed in E.coli. The sequence is that of Tetracycline resistance protein TetQ (tetQ) from Bacteroides fragilis.